The sequence spans 431 residues: Saglin (431 aa).

Residues 1-39 form the signal peptide; the sequence is MSVRGYSGVQVISSRKHRSMSRLPTVLLLLASAAVLAAG. Asparagine 95 is a glycosylation site (N-linked (GlcNAc...) asparagine). Positions 120 to 169 form a coiled coil; it reads LDDAQRQMEQEHRQYAATLEEQLHAAQQETQQEQEMKKALQKQLDALTDS.

Homodimer; disulfide-linked. As to quaternary structure, (Microbial infection) Interacts with Plasmodium berghei TRAP (via integrin-like A-domain); the interaction probably promotes sporozoite invasion of salivary gland. As to expression, female saliva (at protein level). Female salivary gland (at protein level).

Its subcellular location is the secreted. (Microbial infection) Facilitates invasion of mosquito salivary glands by Plasmodium yoelii sporozoites. In terms of biological role, (Microbial infection) Facilitates invasion of mosquito salivary glands by Plasmodium falciparum sporozoites. Its function is as follows. (Microbial infection) Probably facilitates invasion of mosquito salivary glands by Plasmodium berghei sporozoites. This is Saglin from Anopheles gambiae (African malaria mosquito).